Consider the following 154-residue polypeptide: Myoglobin (154 aa).

Positions 2–148 constitute a Globin domain; it reads GLSDGEWQLV…FRNDIAAKYK (147 aa). Position 4 is a phosphoserine (Ser-4). Nitrite is bound at residue His-65. His-65 provides a ligand contact to O2. Thr-68 is subject to Phosphothreonine. His-94 lines the heme b pocket.

This sequence belongs to the globin family. As to quaternary structure, monomeric.

The protein resides in the cytoplasm. It localises to the sarcoplasm. The catalysed reaction is Fe(III)-heme b-[protein] + nitric oxide + H2O = Fe(II)-heme b-[protein] + nitrite + 2 H(+). It catalyses the reaction H2O2 + AH2 = A + 2 H2O. Functionally, monomeric heme protein which primary function is to store oxygen and facilitate its diffusion within muscle tissues. Reversibly binds oxygen through a pentacoordinated heme iron and enables its timely and efficient release as needed during periods of heightened demand. Depending on the oxidative conditions of tissues and cells, and in addition to its ability to bind oxygen, it also has a nitrite reductase activity whereby it regulates the production of bioactive nitric oxide. Under stress conditions, like hypoxia and anoxia, it also protects cells against reactive oxygen species thanks to its pseudoperoxidase activity. This Sciurus vulgaris (Eurasian red squirrel) protein is Myoglobin (MB).